The chain runs to 824 residues: Probable receptor-like protein kinase At5g24010 (824 aa).

Residues 1 to 24 form the signal peptide; it reads MAFPINLTQTLLFFFCPLLHLSFA. Asn-6, Asn-41, Asn-204, Asn-227, and Asn-291 each carry an N-linked (GlcNAc...) asparagine glycan. Residues 25–406 lie on the Extracellular side of the membrane; sequence AFTPTDNYLI…SSEVVSGKRN (382 aa). The helical transmembrane segment at 407 to 427 threads the bilayer; it reads VVWIVVGSVLGGFVFLSLFFL. Residues 428-824 are Cytoplasmic-facing; the sequence is SVLCLCRRKN…FSQLMTNAGR (397 aa). The segment at 440 to 467 is disordered; sequence TRSSESTGWTPLRRFRGSSNSRTTERTV. A compositionally biased stretch (polar residues) spans 456–467; sequence GSSNSRTTERTV. The Protein kinase domain maps to 489-764; the sequence is FDRSLVIGVG…VLWNLEHVLQ (276 aa). Residues 495 to 503 and Lys-517 contribute to the ATP site; that span reads IGVGGFGMV. The active-site Proton acceptor is Asp-613. The tract at residues 777-803 is disordered; that stretch reads DYGDVTDPRTARQGLSNGSNIERDYGD.

This sequence belongs to the protein kinase superfamily. Ser/Thr protein kinase family.

Its subcellular location is the membrane. This Arabidopsis thaliana (Mouse-ear cress) protein is Probable receptor-like protein kinase At5g24010.